We begin with the raw amino-acid sequence, 918 residues long: Nitrate reductase [NADH] (918 aa).

The segment at 25–44 is disordered; the sequence is KNGPNHRADSPVRGCNFPNS. C195 lines the Mo-molybdopterin pocket. One can recognise a Cytochrome b5 heme-binding domain in the interval 543 to 618; the sequence is SNTYTLSEVK…LEDYRIGELI (76 aa). 2 residues coordinate heme: H578 and H601. An FAD-binding FR-type domain is found at 661–774; sequence NEKIPCKLIS…KGPLGHIEYT (114 aa). FAD is bound by residues 714–717, 731–735, F736, F743, 748–750, and T801; these read RAYT, VVKVY, and IMS.

This sequence belongs to the nitrate reductase family. In terms of assembly, homodimer. FAD is required as a cofactor. It depends on heme as a cofactor. Mo-molybdopterin serves as cofactor.

The enzyme catalyses nitrite + NAD(+) + H2O = nitrate + NADH + H(+). Nitrate reductase is a key enzyme involved in the first step of nitrate assimilation in plants, fungi and bacteria. The protein is Nitrate reductase [NADH] of Cucurbita maxima (Pumpkin).